We begin with the raw amino-acid sequence, 186 residues long: Peptidoglycan-recognition protein SD (186 aa).

The N-terminal stretch at 1 to 18 (MTWIGLLIVGLTAIAVQG) is a signal peptide. The N-acetylmuramoyl-L-alanine amidase domain maps to 47 to 169 (AVIAHTAGGA…RQVSATKSPG (123 aa)). C57 and C63 form a disulfide bridge. Residue N181 is glycosylated (N-linked (GlcNAc...) asparagine).

The protein belongs to the N-acetylmuramoyl-L-alanine amidase 2 family. In terms of tissue distribution, in larvae, it is mainly expressed in fat body. Also expressed in uninduced hemocytes and mbn-2 cells.

The protein resides in the secreted. Its function is as follows. Peptidoglycan-recognition protein that plays a key role in innate immunity by binding to peptidoglycans (PGN) of Gram-positive bacteria and activating the Toll pathway. Has no activity against on Gram-negative bacteria and fungi. Shows some partial redundancy with PRPGP-SA in Gram-positive bacteria recognition. May act by activating the proteolytic cleavage of Spatzle and the subsequent activation of Toll pathway. Recognizes S.aureus PGN. The polypeptide is Peptidoglycan-recognition protein SD (PGRP-SD) (Drosophila melanogaster (Fruit fly)).